A 229-amino-acid polypeptide reads, in one-letter code: Pyridoxal phosphate homeostasis protein (229 aa).

An N6-(pyridoxal phosphate)lysine modification is found at Lys36.

The protein belongs to the pyridoxal phosphate-binding protein YggS/PROSC family. As to quaternary structure, monomer.

Pyridoxal 5'-phosphate (PLP)-binding protein, which is involved in PLP homeostasis. This Buchnera aphidicola subsp. Schizaphis graminum (strain Sg) protein is Pyridoxal phosphate homeostasis protein.